The primary structure comprises 152 residues: Protein NrdI (152 aa).

The protein belongs to the NrdI family.

In terms of biological role, probably involved in ribonucleotide reductase function. The sequence is that of Protein NrdI from Mycobacterium sp. (strain JLS).